Here is a 643-residue protein sequence, read N- to C-terminus: Threonine--tRNA ligase (643 aa).

The TGS domain maps to 3-64; that stretch reads DVVKITFPDG…EEDGAISIIT (62 aa). The catalytic stretch occupies residues 245–542; it reads DHRKLGKELD…LIEEYKGAFP (298 aa). Zn(2+)-binding residues include Cys338, His389, and His519.

It belongs to the class-II aminoacyl-tRNA synthetase family. As to quaternary structure, homodimer. Zn(2+) is required as a cofactor.

It localises to the cytoplasm. It catalyses the reaction tRNA(Thr) + L-threonine + ATP = L-threonyl-tRNA(Thr) + AMP + diphosphate + H(+). In terms of biological role, catalyzes the attachment of threonine to tRNA(Thr) in a two-step reaction: L-threonine is first activated by ATP to form Thr-AMP and then transferred to the acceptor end of tRNA(Thr). Also edits incorrectly charged L-seryl-tRNA(Thr). The sequence is that of Threonine--tRNA ligase from Anoxybacillus flavithermus (strain DSM 21510 / WK1).